A 212-amino-acid chain; its full sequence is Uridine kinase (212 aa).

13 to 20 (GASASGKS) is a binding site for ATP.

Belongs to the uridine kinase family.

The protein localises to the cytoplasm. The catalysed reaction is uridine + ATP = UMP + ADP + H(+). The enzyme catalyses cytidine + ATP = CMP + ADP + H(+). Its pathway is pyrimidine metabolism; CTP biosynthesis via salvage pathway; CTP from cytidine: step 1/3. It functions in the pathway pyrimidine metabolism; UMP biosynthesis via salvage pathway; UMP from uridine: step 1/1. In Shewanella putrefaciens (strain CN-32 / ATCC BAA-453), this protein is Uridine kinase.